The following is a 125-amino-acid chain: MSDIRFTDQHEWVRVDGDIATIGITDYAQEQLGDVVFVELPEVGKDIAAGDEAAVVESVKAASEVYSPVSGEVIDVNSDIEKTPAGVNENAMGDGWFIKLRLADPSELDKLMDEAAYSEFVESLQ.

The region spanning 19–101 is the Lipoyl-binding domain; sequence IATIGITDYA…MGDGWFIKLR (83 aa). N6-lipoyllysine is present on lysine 60.

It belongs to the GcvH family. The glycine cleavage system is composed of four proteins: P, T, L and H. (R)-lipoate serves as cofactor.

Its function is as follows. The glycine cleavage system catalyzes the degradation of glycine. The H protein shuttles the methylamine group of glycine from the P protein to the T protein. The protein is Glycine cleavage system H protein of Parvibaculum lavamentivorans (strain DS-1 / DSM 13023 / NCIMB 13966).